The following is a 1210-amino-acid chain: Inner capsid protein VP3 (1210 aa).

Residues 1-28 form a disordered region; it reads MPRTSRNVRATEVATTAIPPSNAATDTT. The segment at 113 to 136 adopts a C2H2-type zinc-finger fold; it reads LRCQQCGAKFSSMTQLAEHVRTEH. Residues 294–319 are disordered; the sequence is PHAGPQVRSVQSQDQQVYSVDSGPDP. Residues 299 to 315 show a composition bias toward low complexity; the sequence is QVRSVQSQDQQVYSVDS.

It belongs to the turreted BTV-fold inner capsid family. As to quaternary structure, homodecamer; each decamer is made up of two conformers of VP2, called VP2A and VP2B. 12 homodecamers assemble to form an icosahedral capsid. Interacts with VP6.

The protein localises to the virion. Inner capsid protein that self-assembles to form an icosahedral capsid with a T=2 symmetry, which consists of 120 copies of VP2, with channels at each of its five-fold vertices. This capsid constitutes the innermost concentric layer of the viral mature particle. The polypeptide is Inner capsid protein VP3 (S3) (Aquareovirus A (isolate Chum salmon/Japan/CSRV/1981) (AQRV-A)).